The chain runs to 184 residues: Jacalin-related lectin 2 (184 aa).

In terms of domain architecture, Jacalin-type lectin spans Lys-4–Pro-163.

This sequence belongs to the jacalin lectin family.

This Arabidopsis thaliana (Mouse-ear cress) protein is Jacalin-related lectin 2 (JAL2).